Reading from the N-terminus, the 178-residue chain is Large ribosomal subunit protein uL10 (178 aa).

Belongs to the universal ribosomal protein uL10 family. Part of the ribosomal stalk of the 50S ribosomal subunit. The N-terminus interacts with L11 and the large rRNA to form the base of the stalk. The C-terminus forms an elongated spine to which L12 dimers bind in a sequential fashion forming a multimeric L10(L12)X complex.

In terms of biological role, forms part of the ribosomal stalk, playing a central role in the interaction of the ribosome with GTP-bound translation factors. The polypeptide is Large ribosomal subunit protein uL10 (Dictyoglomus thermophilum (strain ATCC 35947 / DSM 3960 / H-6-12)).